Consider the following 92-residue polypeptide: Putative regulatory protein CKL_1364 (92 aa).

The protein belongs to the RemA family.

This Clostridium kluyveri (strain ATCC 8527 / DSM 555 / NBRC 12016 / NCIMB 10680 / K1) protein is Putative regulatory protein CKL_1364.